A 275-amino-acid chain; its full sequence is Nurim (275 aa).

Residues 1–4 (MASV) are Nuclear-facing. Residues 5 to 32 (TFRDGFLCVSALITFVFVFVTGADFVRF) form a helical membrane-spanning segment. The Perinuclear space portion of the chain corresponds to 33 to 63 (VSFRAINHNLSGAAPLCRDSVPWSVALRDGV). The chain crosses the membrane as a helical span at residues 64–85 (VQKAVAVDVLLLVVFSLQHSLL). At 86–102 (AWTPVKRVCQSVFGVLS) the chain is on the nuclear side. The chain crosses the membrane as a helical span at residues 103–119 (RSVYCFTTAAALQILMH). At 120–138 (YWRPVTSAPCLWSVSSAPW) the chain is on the perinuclear space side. A helical membrane pass occupies residues 139–169 (EIWFPLICFIVHFLCWAIICSILLIFDYPEL). Residues 170 to 196 (LGIKQVYYECLGLGDPLLLKSERAQRL) lie on the Nuclear side of the membrane. The chain crosses the membrane as a helical span at residues 197–215 (YSHLRHPVCVELLTVLWLL). The Perinuclear space portion of the chain corresponds to 216–221 (PSFPLD). Residues 222–239 (RLLLAVFLTVYLILAHSL) traverse the membrane as a helical segment. Over 240–275 (DKQDCAYLRHQLRNKLQLFSTPLEGSEQTNDNNKLE) the chain is Nuclear.

Belongs to the nurim family.

The protein resides in the nucleus inner membrane. This is Nurim (nrm) from Danio rerio (Zebrafish).